The following is a 306-amino-acid chain: Ornithine carbamoyltransferase (306 aa).

Residues 46–49 (STRT), Gln-73, Arg-97, and 124–127 (HPTQ) contribute to the carbamoyl phosphate site. L-ornithine-binding positions include Asn-156, Asp-220, and 224 to 225 (SM). Carbamoyl phosphate contacts are provided by residues 260 to 261 (CL) and Arg-288.

This sequence belongs to the aspartate/ornithine carbamoyltransferase superfamily. OTCase family.

Its subcellular location is the cytoplasm. The enzyme catalyses carbamoyl phosphate + L-ornithine = L-citrulline + phosphate + H(+). Its pathway is amino-acid degradation; L-arginine degradation via ADI pathway; carbamoyl phosphate from L-arginine: step 2/2. Its function is as follows. Reversibly catalyzes the transfer of the carbamoyl group from carbamoyl phosphate (CP) to the N(epsilon) atom of ornithine (ORN) to produce L-citrulline. In Campylobacter jejuni subsp. doylei (strain ATCC BAA-1458 / RM4099 / 269.97), this protein is Ornithine carbamoyltransferase.